A 371-amino-acid chain; its full sequence is Cathepsin W (371 aa).

The first 21 residues, 1 to 21, serve as a signal peptide directing secretion; sequence MTLTAHLSYFLVLLLAGQGLS. The propeptide occupies 22–125; it reads DSLLTKDAGP…KVESNTWGES (104 aa). 2 N-linked (GlcNAc...) asparagine glycosylation sites follow: Asn48 and Asn112. Intrachain disulfides connect Cys148-Cys189, Cys182-Cys224, and Cys282-Cys347. The active site involves Cys151. Asn203 carries N-linked (GlcNAc...) asparagine glycosylation. Active-site residues include His289 and Asn326. Asn344 carries an N-linked (GlcNAc...) asparagine glycan.

This sequence belongs to the peptidase C1 family.

Its subcellular location is the endoplasmic reticulum. In terms of biological role, may have a specific function in the mechanism or regulation of T-cell cytolytic activity. In Mus musculus (Mouse), this protein is Cathepsin W (Ctsw).